A 222-amino-acid polypeptide reads, in one-letter code: Small ribosomal subunit protein uS3 (222 aa).

In terms of domain architecture, KH type-2 spans 38–106 (IRKFISEKLA…NVHINIVEIK (69 aa)).

Belongs to the universal ribosomal protein uS3 family. As to quaternary structure, part of the 30S ribosomal subunit. Forms a tight complex with proteins S10 and S14.

In terms of biological role, binds the lower part of the 30S subunit head. Binds mRNA in the 70S ribosome, positioning it for translation. The chain is Small ribosomal subunit protein uS3 from Lactobacillus johnsonii (strain CNCM I-12250 / La1 / NCC 533).